A 448-amino-acid chain; its full sequence is ATP-dependent protease ATPase subunit HslU (448 aa).

Residues I23, 65–70, D263, E327, and R399 contribute to the ATP site; that span reads GIGKTE.

Belongs to the ClpX chaperone family. HslU subfamily. As to quaternary structure, a double ring-shaped homohexamer of HslV is capped on each side by a ring-shaped HslU homohexamer. The assembly of the HslU/HslV complex is dependent on binding of ATP.

It is found in the cytoplasm. Functionally, ATPase subunit of a proteasome-like degradation complex; this subunit has chaperone activity. The binding of ATP and its subsequent hydrolysis by HslU are essential for unfolding of protein substrates subsequently hydrolyzed by HslV. HslU recognizes the N-terminal part of its protein substrates and unfolds these before they are guided to HslV for hydrolysis. This Borreliella burgdorferi (strain ATCC 35210 / DSM 4680 / CIP 102532 / B31) (Borrelia burgdorferi) protein is ATP-dependent protease ATPase subunit HslU.